We begin with the raw amino-acid sequence, 296 residues long: Cobalamin trafficking protein CblD (296 aa).

Residues 1 to 38 (MAHVLCNRARLVSYLPGFCSLVKRVINPRAFSTAGSSG) constitute a mitochondrion transit peptide. Position 203 is an N6-acetyllysine (Lys203).

Heterodimer with MMACHC. Forms a multiprotein complex with MMACHC, MTR and MTRR.

The protein resides in the cytoplasm. Its subcellular location is the mitochondrion. Involved in cobalamin metabolism and trafficking. Plays a role in regulating the biosynthesis and the proportion of two coenzymes, methylcob(III)alamin (MeCbl) and 5'-deoxyadenosylcobalamin (AdoCbl). Promotes oxidation of cob(II)alamin bound to MMACHC. The processing of cobalamin in the cytosol occurs in a multiprotein complex composed of at least MMACHC, MMADHC, MTRR (methionine synthase reductase) and MTR (methionine synthase) which may contribute to shuttle safely and efficiently cobalamin towards MTR in order to produce methionine. The sequence is that of Cobalamin trafficking protein CblD (Mmadhc) from Rattus norvegicus (Rat).